We begin with the raw amino-acid sequence, 83 residues long: SFNYKTFFKLAAKSNDDVKKAFFVIDQDKSGFIEEDELKLFLQNFSAGARALTAGETKTFLAAGDSDGDGMIGVDEFQALVKA.

2 consecutive EF-hand domains span residues 13–48 (KSNDDVKKAFFVIDQDKSGFIEEDELKLFLQNFSAG) and 52–83 (LTAGETKTFLAAGDSDGDGMIGVDEFQALVKA). Residues Asp-26, Asp-28, Ser-30, Phe-32, Glu-34, Glu-37, Asp-65, Asp-67, Asp-69, Met-71, and Glu-76 each coordinate Ca(2+).

The protein belongs to the parvalbumin family.

Its function is as follows. In muscle, parvalbumin is thought to be involved in relaxation after contraction. It binds two calcium ions. The chain is Parvalbumin beta 3 from Macruronus novaezelandiae (Blue grenadier).